Reading from the N-terminus, the 1057-residue chain is Self-sufficient cytochrome P450 monooxygenase CYP505E3 (1057 aa).

Cys403 contributes to the heme binding site. Positions 465 to 488 (PSAAPFSSHARETTNASLPASPGT) are disordered. The 141-residue stretch at 494–634 (MYVLYGSNTG…AFEAWETKLW (141 aa)) folds into the Flavodoxin-like domain. Residues 500 to 504 (SNTGT) and 578 to 610 (VFGCGHHDWFRTYQRIPKLIDQTLEDRGAQRLV) each bind FMN. Residues 671-900 (HDAALGTVIE…RASNAAFHLP (230 aa)) form the FAD-binding FR-type domain.

It in the N-terminal section; belongs to the cytochrome P450 family. Requires FAD as cofactor. It depends on FMN as a cofactor. The cofactor is heme.

The catalysed reaction is 2 oxidized [cytochrome P450] + NADPH = 2 reduced [cytochrome P450] + NADP(+) + H(+). The enzyme catalyses an organic molecule + reduced [NADPH--hemoprotein reductase] + O2 = an alcohol + oxidized [NADPH--hemoprotein reductase] + H2O + H(+). It carries out the reaction dodecan-1-ol + reduced [NADPH--hemoprotein reductase] + O2 = 1,5-dodecanediol + oxidized [NADPH--hemoprotein reductase] + H2O + H(+). It catalyses the reaction dodecan-1-ol + reduced [NADPH--hemoprotein reductase] + O2 = 1,6-dodecanediol + oxidized [NADPH--hemoprotein reductase] + H2O + H(+). Functionally, self-sufficient cytochrome P450 monooxygenase that catalyzes the regioselective in-chain hydroxylation of fatty alcohols (C9-15) as well as fatty acids (C9-15) at the omega-1 to omega-7 or omega-1 to omega-6 positions, respectively. Is also able to convert naphthalene to 1-naphthol and 1-naphthol further to 1,3-dihydroxynaphthalene. This is Self-sufficient cytochrome P450 monooxygenase CYP505E3 from Phanerodontia chrysosporium (White-rot fungus).